A 361-amino-acid polypeptide reads, in one-letter code: 5-formaminoimidazole-4-carboxamide-1-(beta)-D-ribofuranosyl 5'-monophosphate synthetase (361 aa).

5-amino-1-(5-phospho-beta-D-ribosyl)imidazole-4-carboxamide contacts are provided by His27 and Ser94. The region spanning 116 to 348 (RRILRWESER…MGQRIAREIK (233 aa)) is the ATP-grasp domain. Residues 156-166 (KFPGARGGRGY), 199-202 (EEYV), and Glu230 contribute to the ATP site. Asn258 is a binding site for 5-amino-1-(5-phospho-beta-D-ribosyl)imidazole-4-carboxamide. The Mg(2+) site is built by Gln297 and Glu310.

This sequence belongs to the phosphohexose mutase family. In terms of assembly, homohexamer. Dimer of trimers. Mg(2+) is required as a cofactor. Mn(2+) serves as cofactor.

It catalyses the reaction 5-amino-1-(5-phospho-beta-D-ribosyl)imidazole-4-carboxamide + formate + ATP = 5-formamido-1-(5-phospho-D-ribosyl)imidazole-4-carboxamide + ADP + phosphate. The protein operates within purine metabolism; IMP biosynthesis via de novo pathway; 5-formamido-1-(5-phospho-D-ribosyl)imidazole-4-carboxamide from 5-amino-1-(5-phospho-D-ribosyl)imidazole-4-carboxamide (formate route): step 1/1. With respect to regulation, inhibited by ADP. Its function is as follows. Catalyzes the ATP- and formate-dependent formylation of 5-aminoimidazole-4-carboxamide-1-beta-d-ribofuranosyl 5'-monophosphate (AICAR) to 5-formaminoimidazole-4-carboxamide-1-beta-d-ribofuranosyl 5'-monophosphate (FAICAR) in the absence of folates. In Methanocaldococcus jannaschii (strain ATCC 43067 / DSM 2661 / JAL-1 / JCM 10045 / NBRC 100440) (Methanococcus jannaschii), this protein is 5-formaminoimidazole-4-carboxamide-1-(beta)-D-ribofuranosyl 5'-monophosphate synthetase.